A 630-amino-acid polypeptide reads, in one-letter code: Heat shock cognate 70 kDa protein 3 (630 aa).

The interval 611 to 630 (FYQGNNNPKPTTTTFNQDLD) is disordered. Residues 615-630 (NNNPKPTTTTFNQDLD) are compositionally biased toward low complexity.

This sequence belongs to the heat shock protein 70 family.

May function in protein folding and assembly, and disassembly of protein complexes. The chain is Heat shock cognate 70 kDa protein 3 from Dictyostelium discoideum (Social amoeba).